A 391-amino-acid polypeptide reads, in one-letter code: Ferrochelatase (391 aa).

Residues His-196 and Glu-281 each contribute to the Fe cation site.

It belongs to the ferrochelatase family.

The protein localises to the cytoplasm. The catalysed reaction is heme b + 2 H(+) = protoporphyrin IX + Fe(2+). It participates in porphyrin-containing compound metabolism; protoheme biosynthesis; protoheme from protoporphyrin-IX: step 1/1. In terms of biological role, catalyzes the ferrous insertion into protoporphyrin IX. This is Ferrochelatase from Prochlorococcus marinus (strain MIT 9211).